Here is a 485-residue protein sequence, read N- to C-terminus: Heat stress transcription factor A-1d (485 aa).

Disordered regions lie at residues 1 to 34 (MDVS…SSNA) and 126 to 149 (RRKP…QNSS). A DNA-binding region spans residues 35–129 (PPPFLSKTYD…LLQSITRRKP (95 aa)). Low complexity predominate over residues 136–146 (GHQRSQHSNGQ). Residues 152–218 (ACVEVGKFGL…QLMSFLAKAV (67 aa)) are hydrophobic repeat HR-A/B. Disordered stretches follow at residues 229–269 (QQQN…GQIV) and 436–461 (PVPD…DKTK). Residues 238 to 252 (NRRISDTSKKRRFKR) carry the Bipartite nuclear localization signal motif. Positions 441-455 (MDSTPVDNETEQEQN) are enriched in polar residues. Residues 472–480 (LLSPETLDL) carry the Nuclear export signal motif.

Belongs to the HSF family. Class A subfamily. In terms of assembly, homotrimer. Interacts with HSP90-2. Post-translationally, exhibits temperature-dependent phosphorylation.

The protein localises to the cytoplasm. It localises to the nucleus. Functionally, transcriptional regulator that specifically binds DNA sequence 5'-AGAAnnTTCT-3' known as heat shock promoter elements (HSE). The sequence is that of Heat stress transcription factor A-1d (HSFA1D) from Arabidopsis thaliana (Mouse-ear cress).